We begin with the raw amino-acid sequence, 283 residues long: Phosphatidylserine decarboxylase proenzyme (283 aa).

Catalysis depends on charge relay system; for autoendoproteolytic cleavage activity residues Asp-90, His-143, and Ser-248. Ser-248 acts as the Schiff-base intermediate with substrate; via pyruvic acid; for decarboxylase activity in catalysis. Ser-248 carries the post-translational modification Pyruvic acid (Ser); by autocatalysis.

It belongs to the phosphatidylserine decarboxylase family. PSD-B subfamily. Prokaryotic type I sub-subfamily. As to quaternary structure, heterodimer of a large membrane-associated beta subunit and a small pyruvoyl-containing alpha subunit. Pyruvate is required as a cofactor. In terms of processing, is synthesized initially as an inactive proenzyme. Formation of the active enzyme involves a self-maturation process in which the active site pyruvoyl group is generated from an internal serine residue via an autocatalytic post-translational modification. Two non-identical subunits are generated from the proenzyme in this reaction, and the pyruvate is formed at the N-terminus of the alpha chain, which is derived from the carboxyl end of the proenzyme. The autoendoproteolytic cleavage occurs by a canonical serine protease mechanism, in which the side chain hydroxyl group of the serine supplies its oxygen atom to form the C-terminus of the beta chain, while the remainder of the serine residue undergoes an oxidative deamination to produce ammonia and the pyruvoyl prosthetic group on the alpha chain. During this reaction, the Ser that is part of the protease active site of the proenzyme becomes the pyruvoyl prosthetic group, which constitutes an essential element of the active site of the mature decarboxylase.

Its subcellular location is the cell membrane. The enzyme catalyses a 1,2-diacyl-sn-glycero-3-phospho-L-serine + H(+) = a 1,2-diacyl-sn-glycero-3-phosphoethanolamine + CO2. Its pathway is phospholipid metabolism; phosphatidylethanolamine biosynthesis; phosphatidylethanolamine from CDP-diacylglycerol: step 2/2. Catalyzes the formation of phosphatidylethanolamine (PtdEtn) from phosphatidylserine (PtdSer). This chain is Phosphatidylserine decarboxylase proenzyme, found in Francisella tularensis subsp. mediasiatica (strain FSC147).